A 197-amino-acid chain; its full sequence is MQKIVLATGNPGKVRELANLLADFGLDVVAQTELGVESAEETGLTFIENAILKARHAAQTTGLPAIADDSGLAVDALGGAPGIYSARYAGTDASDQENLEKLLAALQNVPEEKRGAQFHCVLVYMRHAEDPTPLVFHGQWPGVIAHQPAGAAGFGYDPIFYVPALGKTAAELTREEKHAVSHRGQALKLMLDALRDA.

8–13 serves as a coordination point for substrate; sequence TGNPGK. Mg(2+) is bound by residues Glu-40 and Asp-69. Residue Asp-69 is the Proton acceptor of the active site. Residues Ser-70, 154–157, Lys-177, and 182–183 contribute to the substrate site; these read FGYD and HR.

The protein belongs to the HAM1 NTPase family. In terms of assembly, homodimer. Mg(2+) serves as cofactor.

The catalysed reaction is XTP + H2O = XMP + diphosphate + H(+). It catalyses the reaction dITP + H2O = dIMP + diphosphate + H(+). The enzyme catalyses ITP + H2O = IMP + diphosphate + H(+). Pyrophosphatase that catalyzes the hydrolysis of nucleoside triphosphates to their monophosphate derivatives, with a high preference for the non-canonical purine nucleotides XTP (xanthosine triphosphate), dITP (deoxyinosine triphosphate) and ITP. Seems to function as a house-cleaning enzyme that removes non-canonical purine nucleotides from the nucleotide pool, thus preventing their incorporation into DNA/RNA and avoiding chromosomal lesions. The polypeptide is dITP/XTP pyrophosphatase (Yersinia pseudotuberculosis serotype I (strain IP32953)).